The following is a 163-amino-acid chain: Peptidyl-prolyl cis-trans isomerase (163 aa).

Positions 17–163 (KTAYATIKTN…IESVVFSSSL (147 aa)) constitute a PPIase cyclophilin-type domain.

Belongs to the cyclophilin-type PPIase family.

It catalyses the reaction [protein]-peptidylproline (omega=180) = [protein]-peptidylproline (omega=0). PPIases accelerate the folding of proteins. It catalyzes the cis-trans isomerization of proline imidic peptide bonds in oligopeptides. This is Peptidyl-prolyl cis-trans isomerase (ppiA) from Helicobacter pylori (strain ATCC 700392 / 26695) (Campylobacter pylori).